Consider the following 263-residue polypeptide: Probable ABC transporter permease protein slr1045 (263 aa).

The next 7 helical transmembrane spans lie at Leu12 to Leu32, Ser52 to Ala72, Ala97 to Ile117, Leu140 to Val162, Gly167 to Val186, Leu192 to Ile212, and Ala234 to Phe254.

Belongs to the MlaE permease family.

The protein localises to the cell membrane. Functionally, could be part of an ABC transporter complex. The protein is Probable ABC transporter permease protein slr1045 of Synechocystis sp. (strain ATCC 27184 / PCC 6803 / Kazusa).